Here is a 729-residue protein sequence, read N- to C-terminus: Monosaccharide-sensing protein 3 (729 aa).

6 helical membrane-spanning segments follow: residues 5 to 25 (VLVALAAAIGNMLQGWDNATI), 46 to 66 (GLIVAMSLIGATLITTFSGPV), 81 to 101 (VLYFLSSIVMFWSPNVYVLLF), 104 to 124 (LLDGFGIGLAVTLVPIYISET), 135 to 155 (TFPQFCGSGGMFLSYCLVFGM), and 165 to 185 (LMLGVLSIPSIAYFVLAAFFL). The interval 337 to 372 (QESQWDPERNNEDSSDQDENLNSPLLSPQTTEPDDY) is disordered. Residues 356-367 (NLNSPLLSPQTT) are compositionally biased toward polar residues. Ser446 bears the Phosphoserine mark. Transmembrane regions (helical) follow at residues 511–531 (ALMVGVGLQILQQFAGINGVM), 557–577 (ASLLISALTTLLMLPCILVSM), 581–601 (MLSTIPILILSLVTLVIGSLV), 610–630 (LISTASVTVYLSCFVMGFGAI), 650–670 (ICALTFWICDIIVTYTLPVML), and 673–693 (IGIAGVFGIYAIVCAVAWVFV).

Belongs to the major facilitator superfamily. Sugar transporter (TC 2.A.1.1) family. In terms of tissue distribution, weakly expressed.

The protein localises to the vacuole membrane. The catalysed reaction is D-glucose(out) + H(+)(in) = D-glucose(in) + H(+)(out). It catalyses the reaction sucrose(out) + H(+)(in) = sucrose(in) + H(+)(out). Functionally, sugar proton-coupled antiporter which contributes to vacuolar sugar import (e.g. monosaccharides including glucose,sucrose and fructose), particularly during stress responses (e.g. in response to cold). The chain is Monosaccharide-sensing protein 3 from Arabidopsis thaliana (Mouse-ear cress).